A 549-amino-acid chain; its full sequence is Glucose-6-phosphate isomerase (549 aa).

The active-site Proton donor is the glutamate 353. Catalysis depends on residues histidine 384 and lysine 513.

This sequence belongs to the GPI family.

It is found in the cytoplasm. The enzyme catalyses alpha-D-glucose 6-phosphate = beta-D-fructose 6-phosphate. It functions in the pathway carbohydrate biosynthesis; gluconeogenesis. The protein operates within carbohydrate degradation; glycolysis; D-glyceraldehyde 3-phosphate and glycerone phosphate from D-glucose: step 2/4. Catalyzes the reversible isomerization of glucose-6-phosphate to fructose-6-phosphate. This chain is Glucose-6-phosphate isomerase, found in Bartonella bacilliformis (strain ATCC 35685 / KC583 / Herrer 020/F12,63).